A 276-amino-acid polypeptide reads, in one-letter code: Protein PXR1 (276 aa).

The tract at residues 1–23 (MGLAGTKIKQRFGNDPRNTNWSN) is disordered. The G-patch domain maps to 25 to 71 (TSRFGHQYLAKMGWQQGSGLGLVSHALTTHVKVSIKDDNLGLGAKLH). A compositionally biased stretch (basic and acidic residues) spans 152-172 (DDGKKSRKRKADESETKEDKK). The interval 152 to 261 (DDGKKSRKRK…SKWIKQKRAS (110 aa)) is disordered. Over residues 173 to 218 (TLKKHKKEKKDKKEKKEKKKKKEKKDKKDKKDKKNKKDKKDKKDKK) the composition is skewed to basic residues. Residues 219–228 (DKKDKIRTGS) show a composition bias toward basic and acidic residues. The segment covering 229 to 239 (DETLVSKESSA) has biased composition (polar residues).

The protein belongs to the PINX1 family.

Its subcellular location is the nucleus. It is found in the nucleolus. Involved in rRNA-processing at A0, A1 and A2 sites and negatively regulates telomerase. This is Protein PXR1 (PXR1) from Candida albicans (strain SC5314 / ATCC MYA-2876) (Yeast).